Reading from the N-terminus, the 285-residue chain is Protoheme IX farnesyltransferase (285 aa).

8 helical membrane-spanning segments follow: residues 19–39 (RIIW…GKLM), 40–60 (PLSI…SMII), 90–110 (AIYV…LDNP), 111–131 (LTSF…TVWL), 135–155 (SPLN…AGYA), 165–185 (SILL…ALAL), 220–240 (IPFA…VAGI), and 265–285 (FKFS…TRLI).

This sequence belongs to the UbiA prenyltransferase family. Protoheme IX farnesyltransferase subfamily.

The protein localises to the cell membrane. It carries out the reaction heme b + (2E,6E)-farnesyl diphosphate + H2O = Fe(II)-heme o + diphosphate. Its pathway is porphyrin-containing compound metabolism; heme O biosynthesis; heme O from protoheme: step 1/1. In terms of biological role, converts heme B (protoheme IX) to heme O by substitution of the vinyl group on carbon 2 of heme B porphyrin ring with a hydroxyethyl farnesyl side group. This chain is Protoheme IX farnesyltransferase, found in Metallosphaera sedula (strain ATCC 51363 / DSM 5348 / JCM 9185 / NBRC 15509 / TH2).